The primary structure comprises 76 residues: Small ribosomal subunit protein uS17 (76 aa).

The protein belongs to the universal ribosomal protein uS17 family. In terms of assembly, part of the 30S ribosomal subunit.

Its function is as follows. One of the primary rRNA binding proteins, it binds specifically to the 5'-end of 16S ribosomal RNA. This chain is Small ribosomal subunit protein uS17, found in Ruegeria pomeroyi (strain ATCC 700808 / DSM 15171 / DSS-3) (Silicibacter pomeroyi).